We begin with the raw amino-acid sequence, 152 residues long: MPTILSSKPAFNSLFSYHLIGLISNKLVTLAPDYTGTKKTTWGARLHLQELRVQTKHRQIEPDIKNLPLQPIRYGSFRPVFHWIEKPCMLIGLCGLHSEVSFIANWPWGKPSEIGGCSIPCMLTGRGSELSYHIRASRRPLPGNRFHFQSFF.

Its subcellular location is the mitochondrion. This is an uncharacterized protein from Arabidopsis thaliana (Mouse-ear cress).